The primary structure comprises 47 residues: MKKITGIILLLLAAIILAACQANYIRDVQGGTVSPSSSAELTGLATQ.

Residues 1-19 (MKKITGIILLLLAAIILAA) form the signal peptide. Residue C20 is the site of N-palmitoyl cysteine attachment. C20 is lipidated: S-diacylglycerol cysteine.

The protein resides in the cell outer membrane. Functionally, lysis proteins are required for both colicin release and partial cell lysis. This is Lysis protein for colicin E9 (lys) from Escherichia coli.